The primary structure comprises 208 residues: Putative thymidylate kinase (208 aa).

Residues 12–19 are defective ATP-binding; sequence GIDGTGTS.

The protein belongs to the thymidylate kinase family.

It carries out the reaction dTMP + ATP = dTDP + ADP. This is Putative thymidylate kinase (tmk) from Treponema pallidum (strain Nichols).